Consider the following 393-residue polypeptide: S-adenosylmethionine synthase 3 (393 aa).

Glutamate 43 contacts K(+). 2 residues coordinate L-methionine: glutamate 56 and glutamine 99. Residues 167–169 (DGK), 235–238 (SGRF), aspartate 246, 252–253 (RK), alanine 269, lysine 273, and lysine 277 each bind ATP. Aspartate 246 is a binding site for L-methionine. Lysine 277 contributes to the L-methionine binding site.

Belongs to the AdoMet synthase family. Homotetramer. The cofactor is Mn(2+). Requires Mg(2+) as cofactor. Co(2+) is required as a cofactor. It depends on K(+) as a cofactor.

It is found in the cytoplasm. It catalyses the reaction L-methionine + ATP + H2O = S-adenosyl-L-methionine + phosphate + diphosphate. It functions in the pathway amino-acid biosynthesis; S-adenosyl-L-methionine biosynthesis; S-adenosyl-L-methionine from L-methionine: step 1/1. Its function is as follows. Catalyzes the formation of S-adenosylmethionine from methionine and ATP. The reaction comprises two steps that are both catalyzed by the same enzyme: formation of S-adenosylmethionine (AdoMet) and triphosphate, and subsequent hydrolysis of the triphosphate. The polypeptide is S-adenosylmethionine synthase 3 (SAM3) (Actinidia chinensis var. chinensis (Chinese soft-hair kiwi)).